A 766-amino-acid polypeptide reads, in one-letter code: FYVE, RhoGEF and PH domain-containing protein 4 (766 aa).

The segment at 1–150 (MEESNPAPTS…SSIANSHDEN (150 aa)) is actin filament-binding. Composition is skewed to polar residues over residues 47 to 62 (LNIP…TSSP) and 70 to 85 (HSPQ…TQGQ). Disordered stretches follow at residues 47 to 86 (LNIP…QGQH) and 143 to 173 (IANS…GEPG). The DH domain maps to 206–393 (KLHKIATELL…STAASHSNSA (188 aa)). Residues 422–521 (ELIKEGQILK…WIKALQESID (100 aa)) enclose the PH 1 domain. The FYVE-type zinc finger occupies 559 to 619 (DNEVTMCMKC…VCKDCYQIIS (61 aa)). Zn(2+)-binding residues include Cys-565, Cys-568, Cys-582, Cys-585, Cys-590, Cys-593, Cys-611, and Cys-614. Residues 643–740 (NSEVCSFLQY…WLKIILLAVT (98 aa)) enclose the PH 2 domain. 2 positions are modified to phosphoserine: Ser-702 and Ser-716. The tract at residues 746–766 (GPSEHLATLNNLPGPKKKSEC) is disordered.

As to quaternary structure, homooligomer. As to expression, detected in thymus, lung, heart, skeletal muscle, small intestine, liver, kidney, spleen and testis. Expressed in all parts of the brain and in the spinal cord at embryonic, postnatal, and adult stages. Levels of expression are lower in postnatal and adult tissues than in embryonic tissues.

It localises to the cytoplasm. The protein localises to the cytoskeleton. The protein resides in the cell projection. It is found in the filopodium. Activates CDC42, a member of the Ras-like family of Rho- and Rac proteins, by exchanging bound GDP for free GTP. Activates MAPK8. Plays a role in regulating the actin cytoskeleton and cell shape. Promotes the formation of lamellipodia. In Mus musculus (Mouse), this protein is FYVE, RhoGEF and PH domain-containing protein 4 (Fgd4).